The following is a 431-amino-acid chain: Glutamate-1-semialdehyde 2,1-aminomutase (431 aa).

Lys-265 bears the N6-(pyridoxal phosphate)lysine mark.

This sequence belongs to the class-III pyridoxal-phosphate-dependent aminotransferase family. HemL subfamily. As to quaternary structure, homodimer. It depends on pyridoxal 5'-phosphate as a cofactor.

The protein localises to the cytoplasm. The enzyme catalyses (S)-4-amino-5-oxopentanoate = 5-aminolevulinate. It functions in the pathway porphyrin-containing compound metabolism; protoporphyrin-IX biosynthesis; 5-aminolevulinate from L-glutamyl-tRNA(Glu): step 2/2. In Vibrio vulnificus (strain YJ016), this protein is Glutamate-1-semialdehyde 2,1-aminomutase.